Consider the following 140-residue polypeptide: Nucleoside diphosphate kinase (140 aa).

Residues K11, F59, R87, T93, R104, and N114 each contribute to the ATP site. The active-site Pros-phosphohistidine intermediate is the H117.

It belongs to the NDK family. Homotetramer. Requires Mg(2+) as cofactor.

It localises to the cytoplasm. The enzyme catalyses a 2'-deoxyribonucleoside 5'-diphosphate + ATP = a 2'-deoxyribonucleoside 5'-triphosphate + ADP. It carries out the reaction a ribonucleoside 5'-diphosphate + ATP = a ribonucleoside 5'-triphosphate + ADP. Major role in the synthesis of nucleoside triphosphates other than ATP. The ATP gamma phosphate is transferred to the NDP beta phosphate via a ping-pong mechanism, using a phosphorylated active-site intermediate. The chain is Nucleoside diphosphate kinase from Rhizobium etli (strain CIAT 652).